Consider the following 1311-residue polypeptide: Cyclin-G-associated kinase (1311 aa).

Ser-2 is subject to N-acetylserine. A phosphoserine mark is found at Ser-2 and Ser-16. The Protein kinase domain occupies 40-314; that stretch reads LRVRRVLAEG…SIAEVVHQLQ (275 aa). Asp-173 serves as the catalytic Proton acceptor. One can recognise a Phosphatase tensin-type domain in the interval 399–566; it reads SVANYAKGDL…EYMCDMVAEE (168 aa). A Phosphoserine modification is found at Ser-456. One can recognise a C2 tensin-type domain in the interval 572-710; that stretch reads SKPILVRAVV…FQVNLEVEVE (139 aa). Disordered stretches follow at residues 709–729 and 749–788; these read VEPR…SMRG and FGKP…SADA. Ser-770 bears the Phosphoserine mark. Low complexity predominate over residues 770–788; that stretch reads SPEAEPTDSDSPPSSSADA. Residue Thr-776 is modified to Phosphothreonine. Phosphoserine is present on Ser-783. Thr-794 bears the Phosphothreonine mark. Disordered stretches follow at residues 801 to 860, 913 to 1035, and 1047 to 1150; these read KEAE…VQQD, CLLG…DLLG, and AVAP…PNYA. Residues Ser-811, Ser-826, Ser-829, Ser-834, and Ser-939 each carry the phosphoserine modification. Composition is skewed to low complexity over residues 925-939 and 950-966; these read PPED…LLAS and PRGG…PLLP. 2 stretches are compositionally biased toward polar residues: residues 967–976 and 1070–1080; these read SSGNNSQPCS and SQASWTKSQNP. Phosphoserine is present on Ser-1096. The span at 1109–1124 shows a compositional bias: polar residues; it reads TATTPKGSSSWQTSRP. Arg-1123 carries the post-translational modification Omega-N-methylarginine. Ser-1176 and Ser-1185 each carry phosphoserine. The J domain maps to 1247–1311; sequence SRWTPVGMAD…FENQGSRPLF (65 aa).

It belongs to the protein kinase superfamily. Ser/Thr protein kinase family. As to expression, ubiquitous. Highest in testis.

Its subcellular location is the cytoplasm. The protein localises to the perinuclear region. It is found in the golgi apparatus. It localises to the trans-Golgi network. The protein resides in the cell junction. Its subcellular location is the focal adhesion. The protein localises to the cytoplasmic vesicle. It is found in the clathrin-coated vesicle. The enzyme catalyses L-seryl-[protein] + ATP = O-phospho-L-seryl-[protein] + ADP + H(+). The catalysed reaction is L-threonyl-[protein] + ATP = O-phospho-L-threonyl-[protein] + ADP + H(+). Its function is as follows. Associates with cyclin G and CDK5. Seems to act as an auxilin homolog that is involved in the uncoating of clathrin-coated vesicles by Hsc70 in non-neuronal cells. Expression oscillates slightly during the cell cycle, peaking at G1. May play a role in clathrin-mediated endocytosis and intracellular trafficking, and in the dynamics of clathrin assembly/disassembly. The sequence is that of Cyclin-G-associated kinase from Homo sapiens (Human).